A 573-amino-acid polypeptide reads, in one-letter code: Proline--tRNA ligase (573 aa).

It belongs to the class-II aminoacyl-tRNA synthetase family. ProS type 1 subfamily. In terms of assembly, homodimer.

It localises to the cytoplasm. It catalyses the reaction tRNA(Pro) + L-proline + ATP = L-prolyl-tRNA(Pro) + AMP + diphosphate. Catalyzes the attachment of proline to tRNA(Pro) in a two-step reaction: proline is first activated by ATP to form Pro-AMP and then transferred to the acceptor end of tRNA(Pro). As ProRS can inadvertently accommodate and process non-cognate amino acids such as alanine and cysteine, to avoid such errors it has two additional distinct editing activities against alanine. One activity is designated as 'pretransfer' editing and involves the tRNA(Pro)-independent hydrolysis of activated Ala-AMP. The other activity is designated 'posttransfer' editing and involves deacylation of mischarged Ala-tRNA(Pro). The misacylated Cys-tRNA(Pro) is not edited by ProRS. In Cupriavidus necator (strain ATCC 17699 / DSM 428 / KCTC 22496 / NCIMB 10442 / H16 / Stanier 337) (Ralstonia eutropha), this protein is Proline--tRNA ligase.